Consider the following 334-residue polypeptide: Ketol-acid reductoisomerase (NADP(+)) (334 aa).

The KARI N-terminal Rossmann domain occupies 3–183; that stretch reads ATIYYENDAD…GGTRGGVIET (181 aa). NADP(+) contacts are provided by residues 26–29, arginine 49, serine 52, and 84–87; these read YGSQ and DEVQ. Histidine 109 is a catalytic residue. Glycine 135 contributes to the NADP(+) binding site. In terms of domain architecture, KARI C-terminal knotted spans 184–329; that stretch reads TFAEETETDL…LGLRRMMNWI (146 aa). Residues aspartate 192, glutamate 196, glutamate 228, and glutamate 232 each coordinate Mg(2+). Position 253 (serine 253) interacts with substrate.

The protein belongs to the ketol-acid reductoisomerase family. The cofactor is Mg(2+).

It catalyses the reaction (2R)-2,3-dihydroxy-3-methylbutanoate + NADP(+) = (2S)-2-acetolactate + NADPH + H(+). The catalysed reaction is (2R,3R)-2,3-dihydroxy-3-methylpentanoate + NADP(+) = (S)-2-ethyl-2-hydroxy-3-oxobutanoate + NADPH + H(+). The protein operates within amino-acid biosynthesis; L-isoleucine biosynthesis; L-isoleucine from 2-oxobutanoate: step 2/4. It participates in amino-acid biosynthesis; L-valine biosynthesis; L-valine from pyruvate: step 2/4. Its function is as follows. Involved in the biosynthesis of branched-chain amino acids (BCAA). Catalyzes an alkyl-migration followed by a ketol-acid reduction of (S)-2-acetolactate (S2AL) to yield (R)-2,3-dihydroxy-isovalerate. In the isomerase reaction, S2AL is rearranged via a Mg-dependent methyl migration to produce 3-hydroxy-3-methyl-2-ketobutyrate (HMKB). In the reductase reaction, this 2-ketoacid undergoes a metal-dependent reduction by NADPH to yield (R)-2,3-dihydroxy-isovalerate. This Rhodopirellula baltica (strain DSM 10527 / NCIMB 13988 / SH1) protein is Ketol-acid reductoisomerase (NADP(+)).